The following is an 82-amino-acid chain: MANHKSALKRIRSNETKRLRNRYQHKTTRNAIKKLRDADKKEAEGMLPSVISMVDKLAKKNIIHDNKAANLKSQLTKHVAAL.

The segment covering methionine 1–isoleucine 11 has biased composition (basic residues). The segment at methionine 1–arginine 20 is disordered.

Belongs to the bacterial ribosomal protein bS20 family.

Its function is as follows. Binds directly to 16S ribosomal RNA. In Christiangramia forsetii (strain DSM 17595 / CGMCC 1.15422 / KT0803) (Gramella forsetii), this protein is Small ribosomal subunit protein bS20.